We begin with the raw amino-acid sequence, 439 residues long: Histidinol dehydrogenase (439 aa).

NAD(+) contacts are provided by Tyr132, Gln194, and Asn217. Substrate is bound by residues Ser244, Gln266, and His269. Gln266 and His269 together coordinate Zn(2+). Residues Glu335 and His336 each act as proton acceptor in the active site. His336, Asp369, Glu423, and His428 together coordinate substrate. Asp369 contacts Zn(2+). A Zn(2+)-binding site is contributed by His428.

Belongs to the histidinol dehydrogenase family. Requires Zn(2+) as cofactor.

It catalyses the reaction L-histidinol + 2 NAD(+) + H2O = L-histidine + 2 NADH + 3 H(+). It functions in the pathway amino-acid biosynthesis; L-histidine biosynthesis; L-histidine from 5-phospho-alpha-D-ribose 1-diphosphate: step 9/9. Catalyzes the sequential NAD-dependent oxidations of L-histidinol to L-histidinaldehyde and then to L-histidine. The sequence is that of Histidinol dehydrogenase (his2) from Schizosaccharomyces pombe (strain 972 / ATCC 24843) (Fission yeast).